Reading from the N-terminus, the 327-residue chain is Lipoyl synthase (327 aa).

7 residues coordinate [4Fe-4S] cluster: Cys-72, Cys-77, Cys-83, Cys-98, Cys-102, Cys-105, and Ser-313. The region spanning 83–302 (CWSHGTATIM…RRVGLEKGFL (220 aa)) is the Radical SAM core domain.

This sequence belongs to the radical SAM superfamily. Lipoyl synthase family. [4Fe-4S] cluster is required as a cofactor.

The protein resides in the cytoplasm. It catalyses the reaction [[Fe-S] cluster scaffold protein carrying a second [4Fe-4S](2+) cluster] + N(6)-octanoyl-L-lysyl-[protein] + 2 oxidized [2Fe-2S]-[ferredoxin] + 2 S-adenosyl-L-methionine + 4 H(+) = [[Fe-S] cluster scaffold protein] + N(6)-[(R)-dihydrolipoyl]-L-lysyl-[protein] + 4 Fe(3+) + 2 hydrogen sulfide + 2 5'-deoxyadenosine + 2 L-methionine + 2 reduced [2Fe-2S]-[ferredoxin]. The protein operates within protein modification; protein lipoylation via endogenous pathway; protein N(6)-(lipoyl)lysine from octanoyl-[acyl-carrier-protein]: step 2/2. Functionally, catalyzes the radical-mediated insertion of two sulfur atoms into the C-6 and C-8 positions of the octanoyl moiety bound to the lipoyl domains of lipoate-dependent enzymes, thereby converting the octanoylated domains into lipoylated derivatives. The chain is Lipoyl synthase from Francisella philomiragia subsp. philomiragia (strain ATCC 25017 / CCUG 19701 / FSC 153 / O#319-036).